The sequence spans 147 residues: Large ribosomal subunit protein uL15 (147 aa).

Positions 1-57 (MRLHDVKPQKGSKKRKKRVARGISAGQGASAGLGMRGQKSRSGSGTRPGFEGGQQPL) are disordered. Residues 10–20 (KGSKKRKKRVA) are compositionally biased toward basic residues.

The protein belongs to the universal ribosomal protein uL15 family. In terms of assembly, part of the 50S ribosomal subunit.

In terms of biological role, binds to the 23S rRNA. This Nostoc punctiforme (strain ATCC 29133 / PCC 73102) protein is Large ribosomal subunit protein uL15.